The sequence spans 314 residues: Short-chain dehydrogenase/reductase drtF (314 aa).

Positions 26, 50, 73, 100, 185, and 189 each coordinate NADP(+). Catalysis depends on tyrosine 185, which acts as the Proton acceptor. The Lowers pKa of active site Tyr role is filled by lysine 189.

Belongs to the short-chain dehydrogenases/reductases (SDR) family.

It functions in the pathway secondary metabolite biosynthesis; terpenoid biosynthesis. Short-chain dehydrogenase/reductase; part of the gene cluster that mediates the biosynthesis of various drimane-type sesquiterpene esters, compounds that exhibit diverse biological activities and are widely present in eukaryotes. The pathway begins with the synthesis of the backbone drimenol by the terpene cyclase drtB using farnesyl pyrophosphate (FPP) as substrate. The cytochrome P450 monooxygenase drtD is then responsible for the hydroxylations at C-6, C-9 and C-12, as well as the oxidation of hydroxyl groups at C-6 and C-11 to a ketone and an aldehyde, respectively. Then, the biosynthesis can go in two directions, either the hydroxylated drimenol is further hydroxylated at C-2 and C-3 by an enzyme(s) not associated with the drt cluster, or the FAD-binding oxidoreductase drtC further oxidizes C-11 or C-12 to form the butyrolactone ring. DrtB, drtD and drtC are solely responsible for the formation of the different drimane structures observed during drimane sesquiterpenes biosynthesis. The polyketide synthase drtA synthesizes different lengths (C6 and C8) of PKS chains, which are then oxidized to varying degrees by the short-chain dehydrogenase drtF. Finally, these PKS chains are transferred onto drimane sesquiterpenes by the acyltransferase drtE, forming the sesquiterpene esters. In addition to the different fatty acyl-CoA chains produced by drtA, drtE is also able to use cinnamoyl-CoA as a substrate. This chain is Short-chain dehydrogenase/reductase drtF, found in Aspergillus calidoustus.